Consider the following 60-residue polypeptide: Large ribosomal subunit protein bL32 (60 aa).

It belongs to the bacterial ribosomal protein bL32 family.

The chain is Large ribosomal subunit protein bL32 (rpmF) from Borreliella burgdorferi (strain ATCC 35210 / DSM 4680 / CIP 102532 / B31) (Borrelia burgdorferi).